We begin with the raw amino-acid sequence, 415 residues long: Squalene synthase 1 (415 aa).

Helical transmembrane passes span 281-301 and 391-411; these read AIFRFCAIPQIMAIGTLALCF and LIAIIFIILAILYAYLSSNLL.

The protein belongs to the phytoene/squalene synthase family. Requires Mg(2+) as cofactor. It depends on Mn(2+) as a cofactor. In terms of tissue distribution, mostly expressed in the shoot apex (buds) and roots, and, to a lower extent, in stems, leaves, flowers and seeds.

Its subcellular location is the endoplasmic reticulum membrane. It carries out the reaction 2 (2E,6E)-farnesyl diphosphate + NADH + H(+) = squalene + 2 diphosphate + NAD(+). It catalyses the reaction 2 (2E,6E)-farnesyl diphosphate + NADPH + H(+) = squalene + 2 diphosphate + NADP(+). It participates in terpene metabolism; lanosterol biosynthesis; lanosterol from farnesyl diphosphate: step 1/3. Functionally, component of the triterpene saponins (e.g. ginsenosides or panaxosides) and phytosterols biosynthetic pathways. Catalyzes the biosynthesis of squalene. This Panax ginseng (Korean ginseng) protein is Squalene synthase 1.